A 512-amino-acid chain; its full sequence is Cobyric acid synthase (512 aa).

One can recognise a GATase cobBQ-type domain in the interval 251-451 (ALDIAVIRLP…IHGLFDSHHF (201 aa)). C332 functions as the Nucleophile in the catalytic mechanism. H443 is a catalytic residue.

It belongs to the CobB/CobQ family. CobQ subfamily.

Its pathway is cofactor biosynthesis; adenosylcobalamin biosynthesis. In terms of biological role, catalyzes amidations at positions B, D, E, and G on adenosylcobyrinic A,C-diamide. NH(2) groups are provided by glutamine, and one molecule of ATP is hydrogenolyzed for each amidation. This chain is Cobyric acid synthase, found in Yersinia enterocolitica serotype O:8 / biotype 1B (strain NCTC 13174 / 8081).